The sequence spans 400 residues: Mu-type opioid receptor (400 aa).

The Extracellular segment spans residues Met-1 to Ile-68. N-linked (GlcNAc...) asparagine glycosylation is found at Asn-9, Asn-12, Asn-33, Asn-40, and Asn-48. The helical transmembrane segment at Thr-69–Tyr-93 threads the bilayer. Residues Val-94–Asn-106 lie on the Cytoplasmic side of the membrane. A helical membrane pass occupies residues Ile-107–Leu-131. Residues Met-132 to Cys-142 lie on the Extracellular side of the membrane. Cysteines 142 and 219 form a disulfide. Residues Lys-143–Val-165 form a helical membrane-spanning segment. Residues Asp-166 to Asn-185 are Cytoplasmic-facing. The residue at position 168 (Tyr-168) is a Phosphotyrosine. A helical membrane pass occupies residues Ala-186–Met-207. Residues Ala-208–Trp-230 lie on the Extracellular side of the membrane. A helical transmembrane segment spans residues Glu-231–Gly-255. Residues Leu-256–Arg-279 lie on the Cytoplasmic side of the membrane. Residues Ile-280–Ala-306 traverse the membrane as a helical segment. Residues Leu-307–Thr-314 are Extracellular-facing. Residues Phe-315 to Tyr-338 form a helical membrane-spanning segment. The short motif at Asn-334–Tyr-338 is the NPxxY; plays a role in stabilizing the activated conformation of the receptor element. Topologically, residues Ala-339–Pro-400 are cytoplasmic. A lipid anchor (S-palmitoyl cysteine) is attached at Cys-353. Phosphoserine is present on Ser-365. Thr-372 carries the phosphothreonine modification. Ser-377 is modified (phosphoserine). Thr-396 bears the Phosphothreonine mark.

Belongs to the G-protein coupled receptor 1 family. As to quaternary structure, forms homooligomers and heterooligomers with other GPCRs, such as OPRD1, OPRK1, OPRL1, NPFFR2, ADRA2A, SSTR2, CNR1 and CCR5 (probably in dimeric forms). Interacts with heterotrimeric G proteins; interaction with a heterotrimeric complex containing GNAI1, GNB1 and GNG2 stabilizes the active conformation of the receptor and increases its affinity for endomorphin-2, the synthetic opioid peptide DAMGO and for morphinan agonists. Interacts with PPL; the interaction disrupts agonist-mediated G-protein activation. Interacts (via C-terminus) with DNAJB4 (via C-terminus). Interacts with calmodulin; the interaction inhibits the constitutive activity of OPRM1; it abolishes basal and attenuates agonist-stimulated G-protein coupling. Interacts with FLNA, PLD2, RANBP9 and WLS and GPM6A. Interacts with RTP4. Interacts with SYP and GNAS. Interacts with RGS9, RGS17, RGS20, RGS4, PPP1R9B and HINT1. Post-translationally, phosphorylated. Differentially phosphorylated in basal and agonist-induced conditions. Agonist-mediated phosphorylation modulates receptor internalization. Phosphorylated by GRK2 in a agonist-dependent manner. Phosphorylation at Tyr-168 requires receptor activation, is dependent on non-receptor protein tyrosine kinase Src and results in a decrease in agonist efficacy by reducing G-protein coupling efficiency. Phosphorylated on tyrosine residues; the phosphorylation is involved in agonist-induced G-protein-independent receptor down-regulation. Phosphorylation at Ser-377 is involved in G-protein-dependent but not beta-arrestin-dependent activation of the ERK pathway. In terms of processing, ubiquitinated. A basal ubiquitination seems not to be related to degradation. Ubiquitination is increased upon formation of OPRM1:OPRD1 oligomers leading to proteasomal degradation; the ubiquitination is diminished by RTP4.

The protein resides in the cell membrane. It localises to the cell projection. The protein localises to the axon. Its subcellular location is the perikaryon. It is found in the dendrite. The protein resides in the endosome. Its function is as follows. Receptor for endogenous opioids such as beta-endorphin and endomorphin. Receptor for natural and synthetic opioids including morphine, heroin, DAMGO, fentanyl, etorphine, buprenorphin and methadone. Also activated by enkephalin peptides, such as Met-enkephalin or Met-enkephalin-Arg-Phe, with higher affinity for Met-enkephalin-Arg-Phe. Agonist binding to the receptor induces coupling to an inactive GDP-bound heterotrimeric G-protein complex and subsequent exchange of GDP for GTP in the G-protein alpha subunit leading to dissociation of the G-protein complex with the free GTP-bound G-protein alpha and the G-protein beta-gamma dimer activating downstream cellular effectors. The agonist- and cell type-specific activity is predominantly coupled to pertussis toxin-sensitive G(i) and G(o) G alpha proteins, GNAI1, GNAI2, GNAI3 and GNAO1, and to a lesser extent to pertussis toxin-insensitive G alpha proteins GNAZ and GNA15. They mediate an array of downstream cellular responses, including inhibition of adenylate cyclase activity and both N-type and L-type calcium channels, activation of inward rectifying potassium channels, mitogen-activated protein kinase (MAPK), phospholipase C (PLC), phosphoinositide/protein kinase (PKC), phosphoinositide 3-kinase (PI3K) and regulation of NF-kappa-B. Also couples to adenylate cyclase stimulatory G alpha proteins. The selective temporal coupling to G-proteins and subsequent signaling can be regulated by RGSZ proteins, such as RGS9, RGS17 and RGS4. Phosphorylation by members of the GPRK subfamily of Ser/Thr protein kinases and association with beta-arrestins is involved in short-term receptor desensitization. Beta-arrestins associate with the GPRK-phosphorylated receptor and uncouple it from the G-protein thus terminating signal transduction. The phosphorylated receptor is internalized through endocytosis via clathrin-coated pits which involves beta-arrestins. The activation of the ERK pathway occurs either in a G-protein-dependent or a beta-arrestin-dependent manner and is regulated by agonist-specific receptor phosphorylation. Acts as a class A G-protein coupled receptor (GPCR) which dissociates from beta-arrestin at or near the plasma membrane and undergoes rapid recycling. Receptor down-regulation pathways are varying with the agonist and occur dependent or independent of G-protein coupling. Endogenous ligands induce rapid desensitization, endocytosis and recycling. Heterooligomerization with other GPCRs can modulate agonist binding, signaling and trafficking properties. Involved in neurogenesis. The chain is Mu-type opioid receptor (OPRM1) from Saimiri boliviensis boliviensis (Bolivian squirrel monkey).